The following is a 554-amino-acid chain: Glucose-binding protein GlcS (554 aa).

The Cytoplasmic portion of the chain corresponds to 1-17 (MKRKYPYSLAKGLTSTQ). A helical membrane pass occupies residues 18 to 38 (IAVIVAVIVIVIIIGVVAGFV). Over 39 to 525 (LTKGPSTTAV…YGLTNNTQKT (487 aa)) the chain is Extracellular. A helical transmembrane segment spans residues 526 to 546 (SNSVMLFLLPFLALPLAIASI). Over 547–554 (DNKYYLLK) the chain is Cytoplasmic.

Belongs to the bacterial solute-binding protein 1 family. As to quaternary structure, the complex is composed of two ATP-binding proteins (GlcV), two transmembrane proteins (GlcT and GlcU) and a solute-binding protein (GlcS).

The protein localises to the cell membrane. With respect to regulation, binding of glucose is strongly inhibited by galactose and mannose. Its function is as follows. Part of the ABC transporter complex GlcSTUV involved in glucose uptake. Binds glucose. Can also bind galactose and mannose. The sequence is that of Glucose-binding protein GlcS from Saccharolobus solfataricus (strain ATCC 35092 / DSM 1617 / JCM 11322 / P2) (Sulfolobus solfataricus).